Reading from the N-terminus, the 508-residue chain is Cytochrome P450 monooxygenase aflV (508 aa).

A helical membrane pass occupies residues 18–38 (LTWWFLAVGGAWIVSKIIKIL). N-linked (GlcNAc...) asparagine glycans are attached at residues asparagine 192, asparagine 209, asparagine 302, and asparagine 408. Residue cysteine 453 participates in heme binding.

Belongs to the cytochrome P450 family. Requires heme as cofactor.

The protein resides in the membrane. It participates in mycotoxin biosynthesis; aflatoxin biosynthesis. Functionally, cytochrome P450 monooxygenase; part of the gene cluster that mediates the biosynthesis of aflatoxins, a group of polyketide-derived furanocoumarins, and part of the most toxic and carcinogenic compounds among the known mycotoxins. The four major aflatoxins produced by A.parasiticus are aflatoxin B1 (AFB1), aflatoxin B2 (AFB2), aflatoxin G1 (AFG1) and aflatoxin G2 (AFG2). The role of the cytochrome P450 monooxygenase aflV in aflatoxin biosynthesis has still to be characterized. The biosynthesis of aflatoxins begins with the norsolorinic acid synthase aflC that combines a hexanoyl starter unit produced by the fatty acid synthase aflA/aflB and 7 malonyl-CoA extender units to synthesize the precursor NOR. The second step is the conversion of NOR to averantin and requires the norsolorinic acid ketoreductase aflD, which catalyzes the dehydration of norsolorinic acid to form (1'S)-averantin. The norsolorinic acid reductases aflE and aflF may also play a role in the conversion of NOR to AVN. The cytochrome P450 monooxygenase aflG then catalyzes the hydroxylation of AVN to 5'hydroxyaverantin (HAVN). The next step is performed by the 5'-hydroxyaverantin dehydrogenase aflH that transforms HAVN to 5'-oxoaverantin (OAVN) which is further converted to averufin (AVF) by aflK that plays a dual role in the pathway, as a 5'-oxoaverantin cyclase that mediates conversion of 5'-oxoaverantin, as well as a versicolorin B synthase in a later step in the pathway. The averufin oxidase aflI catalyzes the conversion of AVF to versiconal hemiacetal acetate (VHA). VHA is then the substrate for the versiconal hemiacetal acetate esterase aflJ to yield versiconal (VAL). Versicolorin B synthase aflK then converts VAL to versicolorin B (VERB) by closing the bisfuran ring of aflatoxin which is required for DNA-binding, thus giving to aflatoxin its activity as a mutagen. Then, the activity of the versicolorin B desaturase aflL leads to versicolorin A (VERA). A branch point starts from VERB since it can also be converted to dihydrodemethylsterigmatocystin (DMDHST), probably also by aflL, VERA being a precursor for aflatoxins B1 and G1, and DMDHST for aflatoxins B2 and G2. Next, the versicolorin reductase aflM and the cytochrome P450 monooxygenase aflN are involved in conversion of VERA to demethylsterigmatocystin (DMST). AflX and aflY seem also involved in this step, through probable aflX-mediated epoxide ring-opening step following versicolorin A oxidation and aflY-mediated Baeyer-Villiger oxidation required for the formation of the xanthone ring. The methyltransferase aflO then leads to the modification of DMST to sterigmatocystin (ST), and of DMDHST to dihydrosterigmatocystin (DHST). Both ST and DHST are then substrates of the O-methyltransferase aflP to yield O-methylsterigmatocystin (OMST) and dihydro-O-methylsterigmatocystin (DHOMST), respectively. Finally OMST is converted to aflatoxins B1 and G1, and DHOMST to aflatoxins B2 and G2, via the action of several enzymes including O-methylsterigmatocystin oxidoreductase aflQ, the cytochrome P450 monooxygenase aflU, but also the NADH-dependent flavin oxidoreductase nadA which is specifically required for the synthesis of AFG1. In Aspergillus parasiticus (strain ATCC 56775 / NRRL 5862 / SRRC 143 / SU-1), this protein is Cytochrome P450 monooxygenase aflV.